A 994-amino-acid polypeptide reads, in one-letter code: Sarcoplasmic/endoplasmic reticulum calcium ATPase 1 (994 aa).

Topologically, residues 1–48 are cytoplasmic; it reads MENAHAKTAEECLAFFGVNESVGLSGEQVRRALEKYGHNELPAEEGKT. The helical transmembrane segment at 49–69 threads the bilayer; the sequence is IWELVVEQFEDLLVRILLLAA. The Lumenal segment spans residues 70 to 89; that stretch reads CISFVLAWFEEGEETITAFV. Residues 90–110 form a helical membrane-spanning segment; it reads EPFVILLILIANAVVGVWQER. Residues 111 to 253 are Cytoplasmic-facing; it reads NAENAIEALK…QDKTPLQQKL (143 aa). A helical transmembrane segment spans residues 254–273; sequence DEFGEQLSKVISLICVAVWL. Over 274–295 the chain is Lumenal; it reads INIGHFNDPVHGGSWIRGAIYY. A helical transmembrane segment spans residues 296–313; it reads FKIAVALAVAAIPEGLPA. The Ca(2+) site is built by Val-304, Ala-305, Ile-307, and Glu-309. At 314–757 the chain is on the cytoplasmic side; sequence VITTCLALGT…EEGRAIYNNM (444 aa). Residue Asp-351 is the 4-aspartylphosphate intermediate of the active site. Mg(2+)-binding residues include Asp-351 and Thr-353. Residues Thr-353, Glu-442, Arg-489, Lys-515, Arg-560, Thr-625, Gly-626, Asp-627, Arg-678, and Lys-684 each coordinate ATP. Asp-703 lines the Mg(2+) pocket. Position 706 (Asn-706) interacts with ATP. Residues 758-777 form a helical membrane-spanning segment; the sequence is KQFIRYLISSNVGEVVCIFL. Ca(2+) is bound by residues Asn-768 and Glu-771. Topologically, residues 778–787 are lumenal; sequence TAALGLPEAL. The helical transmembrane segment at 788–808 threads the bilayer; it reads IPVQLLWVNLVTDGLPATALG. The interval 788–808 is interaction with PLN; it reads IPVQLLWVNLVTDGLPATALG. Residues Asn-796, Thr-799, and Asp-800 each coordinate Ca(2+). At 809-828 the chain is on the cytoplasmic side; it reads FNPPDLDIMDKPPRSPKEPL. Residues 829–851 form a helical membrane-spanning segment; the sequence is ISGWLFFRYLAIGGYVGAATVGA. Topologically, residues 852–897 are lumenal; sequence AAWWFLYAEDGPSLTYHQLTHFMQCTHHNAEFEGVDCDIFESPVPM. The cysteines at positions 876 and 888 are disulfide-linked. The helical transmembrane segment at 898-917 threads the bilayer; sequence TMALSVLVTIEMCNALNSLS. Glu-908 contributes to the Ca(2+) binding site. The Cytoplasmic segment spans residues 918–930; the sequence is ENQSLLRMPPWVN. The chain crosses the membrane as a helical span at residues 931 to 949; it reads IWLVGSICLSMSLHFVILY. The interaction with PLN stretch occupies residues 932 to 943; sequence WLVGSICLSMSL. The Lumenal segment spans residues 950–964; the sequence is VDPLPMIFKLTHLDL. The chain crosses the membrane as a helical span at residues 965-985; it reads AHWLVVLRISFPVILLDEALK. Residues 986–994 lie on the Cytoplasmic side of the membrane; the sequence is FVARNYLEA.

This sequence belongs to the cation transport ATPase (P-type) (TC 3.A.3) family. Type IIA subfamily. As to quaternary structure, interacts with sarcolipin (SLN). Interacts with phospholamban (PLN). Interacts with myoregulin (MRLN). Interacts with DWORF. Requires Mg(2+) as cofactor.

The protein localises to the endoplasmic reticulum membrane. It is found in the sarcoplasmic reticulum membrane. The enzyme catalyses Ca(2+)(in) + ATP + H2O = Ca(2+)(out) + ADP + phosphate + H(+). Its activity is regulated as follows. Inhibited by sarcolipin (SLN) and myoregulin (MRLN). Also shown to be inhibited by phospholamban (PLN) in vitro. Enhanced by DWORF; DWORF increases activity by displacing sarcolipin (SLN), phospholamban (PLN) and myoregulin (MRLN). In terms of biological role, key regulator of striated muscle performance by acting as the major Ca(2+) ATPase responsible for the reuptake of cytosolic Ca(2+) into the sarcoplasmic reticulum. Catalyzes the hydrolysis of ATP coupled with the translocation of calcium from the cytosol to the sarcoplasmic reticulum lumen. Contributes to calcium sequestration involved in muscular excitation/contraction. The polypeptide is Sarcoplasmic/endoplasmic reticulum calcium ATPase 1 (ATP2A1) (Gallus gallus (Chicken)).